The following is a 392-amino-acid chain: tRNA (guanine-N(7)-)-methyltransferase (392 aa).

Residues glutamate 123, glutamate 148, and aspartate 175 each contribute to the S-adenosyl-L-methionine site. Substrate contacts are provided by lysine 201 and aspartate 231.

This sequence belongs to the class I-like SAM-binding methyltransferase superfamily. TrmB family.

The catalysed reaction is guanosine(46) in tRNA + S-adenosyl-L-methionine = N(7)-methylguanosine(46) in tRNA + S-adenosyl-L-homocysteine. It participates in tRNA modification; N(7)-methylguanine-tRNA biosynthesis. Catalyzes the formation of N(7)-methylguanine at position 46 (m7G46) in tRNA. The sequence is that of tRNA (guanine-N(7)-)-methyltransferase from Campylobacter jejuni subsp. jejuni serotype O:2 (strain ATCC 700819 / NCTC 11168).